The following is a 434-amino-acid chain: Glucose-1-phosphate adenylyltransferase (434 aa).

Residues tyrosine 112, glycine 178, glutamate 193–lysine 194, and serine 211 each bind alpha-D-glucose 1-phosphate.

This sequence belongs to the bacterial/plant glucose-1-phosphate adenylyltransferase family. In terms of assembly, homotetramer.

It carries out the reaction alpha-D-glucose 1-phosphate + ATP + H(+) = ADP-alpha-D-glucose + diphosphate. The protein operates within glycan biosynthesis; glycogen biosynthesis. Involved in the biosynthesis of ADP-glucose, a building block required for the elongation reactions to produce glycogen. Catalyzes the reaction between ATP and alpha-D-glucose 1-phosphate (G1P) to produce pyrophosphate and ADP-Glc. This chain is Glucose-1-phosphate adenylyltransferase, found in Mannheimia succiniciproducens (strain KCTC 0769BP / MBEL55E).